The sequence spans 291 residues: Pirin (291 aa).

The Fe cation site is built by His-56, His-58, His-101, and Glu-103.

This sequence belongs to the pirin family. May interact with NF1/CTF1. Interacts with BCL3. Identified in a complex comprised of PIR, BLC3, NFKB1 and target DNA. Fe cation serves as cofactor.

Its subcellular location is the nucleus. It is found in the cytoplasm. It catalyses the reaction quercetin + O2 = 2-(3,4-dihydroxybenzoyloxy)-4,6-dihydroxybenzoate + CO. The protein operates within flavonoid metabolism; quercetin degradation. Transcriptional coregulator of NF-kappa-B which facilitates binding of NF-kappa-B proteins to target kappa-B genes in a redox-state-dependent manner. May be required for efficient terminal myeloid maturation of hematopoietic cells. Has quercetin 2,3-dioxygenase activity (in vitro). In Rattus norvegicus (Rat), this protein is Pirin (Pir).